The primary structure comprises 108 residues: PTS system galactose-specific EIIB component (108 aa).

Positions 3-108 (DKVIALACAA…VLAAAENLMN (106 aa)) constitute a PTS EIIB type-3 domain. Catalysis depends on Cys-10, which acts as the Phosphocysteine intermediate. A Phosphocysteine; by EIIA modification is found at Cys-10.

The enzyme catalyses N(pros)-phospho-L-histidyl-[protein] + D-galactose(out) = D-galactose 6-phosphate(in) + L-histidyl-[protein]. Its function is as follows. The phosphoenolpyruvate-dependent sugar phosphotransferase system (sugar PTS), a major carbohydrate active transport system, catalyzes the phosphorylation of incoming sugar substrates concomitantly with their translocation across the cell membrane. Involved in galactose transport with PtcA and Lmg_0963. In Lactococcus lactis subsp. cremoris (strain MG1363), this protein is PTS system galactose-specific EIIB component.